The sequence spans 320 residues: ATP-dependent 6-phosphofructokinase isozyme 1 (320 aa).

Residue glycine 12 coordinates ATP. Residues 22-26 and 55-60 contribute to the ADP site; these read RGVVR and RYSVSD. ATP is bound by residues 73-74 and 103-106; these read RF and GDGS. Aspartate 104 provides a ligand contact to Mg(2+). 126–128 contacts substrate; that stretch reads TID. The active-site Proton acceptor is aspartate 128. Arginine 155 provides a ligand contact to ADP. Substrate contacts are provided by residues arginine 163 and 170 to 172; that span reads MGR. ADP contacts are provided by residues 186–188, lysine 212, and 214–216; these read GCE and KKH. Substrate is bound by residues glutamate 223, arginine 244, and 250–253; that span reads HIQR.

It belongs to the phosphofructokinase type A (PFKA) family. ATP-dependent PFK group I subfamily. Prokaryotic clade 'B1' sub-subfamily. In terms of assembly, homotetramer. Mg(2+) is required as a cofactor.

The protein localises to the cytoplasm. It catalyses the reaction beta-D-fructose 6-phosphate + ATP = beta-D-fructose 1,6-bisphosphate + ADP + H(+). It functions in the pathway carbohydrate degradation; glycolysis; D-glyceraldehyde 3-phosphate and glycerone phosphate from D-glucose: step 3/4. Its activity is regulated as follows. Allosterically activated by ADP and other diphosphonucleosides, and allosterically inhibited by phosphoenolpyruvate. Functionally, catalyzes the phosphorylation of D-fructose 6-phosphate to fructose 1,6-bisphosphate by ATP, the first committing step of glycolysis. In Shigella boydii serotype 18 (strain CDC 3083-94 / BS512), this protein is ATP-dependent 6-phosphofructokinase isozyme 1.